A 312-amino-acid chain; its full sequence is Taste receptor type 2 member 140 (312 aa).

Topologically, residues 1–9 (MKVTVECAL) are extracellular. A helical membrane pass occupies residues 10–30 (LITLIVEIIIGCLGNGFIAVV). At 31–46 (NIMDWTKRRRFSLVDQ) the chain is on the cytoplasmic side. Residues 47-67 (ILTALAISRLAFVWSLLTVLV) form a helical membrane-spanning segment. The Extracellular segment spans residues 68–87 (ISELHSSLLITRKMLRIINN). Residues 88 to 108 (FWTVTNHFSIWLATCLSIFYF) form a helical membrane-spanning segment. Over 109-133 (LKIANFSNSIFLSLRWRVKTVVSLT) the chain is Cytoplasmic. A helical transmembrane segment spans residues 134–154 (LLVSLLLLLVNVIIINTCIVI). Residues 155–185 (SVEGYKVNMSYSSHFNNNPQISRIPLFTNTM) are Extracellular-facing. Asn162 carries an N-linked (GlcNAc...) asparagine glycan. The chain crosses the membrane as a helical span at residues 186–206 (FTFIPFTVTLTIFLLLIFSLW). Residues 207 to 229 (RHLKKMQHRAKGPRDPSTTAHIK) lie on the Cytoplasmic side of the membrane. Residues 230–250 (ALQMVVTFLFLYTIFFLALVM) traverse the membrane as a helical segment. Topologically, residues 251-264 (QAWNNEIQSKTVFN) are extracellular. The helical transmembrane segment at 265-285 (LVFESIALAFPSGHSCVLILG) threads the bilayer. The Cytoplasmic segment spans residues 286–312 (NSKLRQAFLTIIWWLRSSFNAAELSSP).

This sequence belongs to the G-protein coupled receptor T2R family.

It is found in the membrane. In terms of biological role, putative taste receptor which may play a role in the perception of bitterness. The protein is Taste receptor type 2 member 140 of Rattus norvegicus (Rat).